Reading from the N-terminus, the 176-residue chain is NADH-quinone oxidoreductase subunit 10 (176 aa).

5 helical membrane passes run 2-22 (SLLE…VVTL), 26-46 (IHAA…YVAL), 56-76 (VIVY…LLFA), 91-111 (PLAA…LWGL), and 137-157 (FVLL…VALV).

The protein belongs to the complex I subunit 6 family. NDH-1 is composed of 15 different subunits, Nqo1 to Nqo15. The complex has a L-shaped structure, with the hydrophobic arm (subunits Nqo7, Nqo8 and Nqo10 to Nqo14) embedded in the membrane and the hydrophilic peripheral arm (subunits Nqo1 to Nqo6, Nqo9 and Nqo15) protruding into the bacterial cytoplasm. The hydrophilic domain contains all the redox centers.

It localises to the cell inner membrane. The enzyme catalyses a quinone + NADH + 5 H(+)(in) = a quinol + NAD(+) + 4 H(+)(out). Functionally, NDH-1 shuttles electrons from NADH, via FMN and iron-sulfur (Fe-S) centers, to quinones in the respiratory chain. The immediate electron acceptor for the enzyme in this species is menaquinone. Couples the redox reaction to proton translocation (for every two electrons transferred, four hydrogen ions are translocated across the cytoplasmic membrane), and thus conserves the redox energy in a proton gradient required for the synthesis of ATP. The polypeptide is NADH-quinone oxidoreductase subunit 10 (nqo10) (Thermus thermophilus (strain ATCC 27634 / DSM 579 / HB8)).